The following is a 332-amino-acid chain: Arabinogalactan endo-beta-1,4-galactanase (332 aa).

An N-linked (GlcNAc...) asparagine glycan is attached at Asn111. The active-site Proton donor is the Glu135. Glu245 acts as the Nucleophile in catalysis.

This sequence belongs to the glycosyl hydrolase 53 family.

It carries out the reaction The enzyme specifically hydrolyzes (1-&gt;4)-beta-D-galactosidic linkages in type I arabinogalactans.. The polypeptide is Arabinogalactan endo-beta-1,4-galactanase (Thermothelomyces thermophilus (Myceliophthora thermophila)).